A 785-amino-acid polypeptide reads, in one-letter code: Conserved oligomeric Golgi complex subunit 4 (785 aa).

The tract at residues 1–24 is disordered; the sequence is MADLDSPPKLSGVQQPSEGVGGGR. Ala-2 is subject to N-acetylalanine. The segment at 2-84 is interaction with SCFD1; that stretch reads ADLDSPPKLS…VTLHRMGPNL (83 aa). Position 6 is a phosphoserine (Ser-6). The tract at residues 85-153 is interaction with STX5; the sequence is QLIEGDAKQL…TALRSEDYEQ (69 aa). The d domain stretch occupies residues 618 to 740; it reads PQVQPWINSF…SQMATILNLE (123 aa). The tract at residues 741-785 is e domain; essential for proper cell surface glycosylation; sequence RVTEILDYWGPNSGPLTWRLTPAEVRQVLALRIDFRSEDIKRLRL.

Belongs to the COG4 family. As to quaternary structure, monomer. Component of the conserved oligomeric Golgi (COG) complex which is composed of eight different subunits and is required for normal Golgi morphology and localization. Mediates interaction of SCFD1 with the COG complex. Interacts with STX5.

It is found in the cytoplasm. It localises to the cytosol. The protein localises to the golgi apparatus membrane. Functionally, required for normal Golgi function. Plays a role in SNARE-pin assembly and Golgi-to-ER retrograde transport via its interaction with SCFD1. In Homo sapiens (Human), this protein is Conserved oligomeric Golgi complex subunit 4 (COG4).